The following is a 1129-amino-acid chain: Tyrosine-protein kinase JAK2 (1129 aa).

The FERM domain maps to 35-378 (PLLQVYLYYS…GYYRLTADAH (344 aa)). A Phosphotyrosine; by autocatalysis modification is found at Tyr-117. An SH2; atypical domain is found at 399–480 (HGPIFMDFAI…NLKDLLTCYQ (82 aa)). Protein kinase domains follow at residues 542–806 (LIFE…NSLF) and 846–1118 (LKFL…DLAQ). 852–860 (LGKGNFGSV) lines the ATP pocket. Phosphotyrosine; by autocatalysis is present on Tyr-865. An ATP-binding site is contributed by Lys-879. Phosphotyrosine; by autocatalysis is present on residues Tyr-963 and Tyr-969. Residue Asp-973 is the Proton acceptor of the active site. 2 positions are modified to phosphotyrosine; by autocatalysis: Tyr-1004 and Tyr-1005.

Belongs to the protein kinase superfamily. Tyr protein kinase family. JAK subfamily. In terms of processing, autophosphorylated, leading to regulate its activity.

The protein resides in the endomembrane system. Its subcellular location is the nucleus. The catalysed reaction is L-tyrosyl-[protein] + ATP = O-phospho-L-tyrosyl-[protein] + ADP + H(+). With respect to regulation, regulated by autophosphorylation, can both activate or decrease activity. Heme regulates its activity by enhancing the phosphorylation on Tyr-1004 and Tyr-1005. Non-receptor tyrosine kinase involved in various processes such as cell growth, development, differentiation or histone modifications. Mediates essential signaling events in both innate and adaptive immunity. In the cytoplasm, plays a pivotal role in signal transduction via its association with cytokine receptors. Following ligand-binding to cell surface receptors, phosphorylates specific tyrosine residues on the cytoplasmic tails of the receptor, creating docking sites for STATs proteins. Subsequently, phosphorylates the STATs proteins once they are recruited to the receptor. Phosphorylated STATs then form homodimer or heterodimers and translocate to the nucleus to activate gene transcription. For example, cell stimulation with erythropoietin (EPO) during erythropoiesis leads to JAK2 autophosphorylation, activation, and its association with erythropoietin receptor (EPOR) that becomes phosphorylated in its cytoplasmic domain. Then, STAT5 (STAT5A or STAT5B) is recruited, phosphorylated and activated by JAK2. Once activated, dimerized STAT5 translocates into the nucleus and promotes the transcription of several essential genes involved in the modulation of erythropoiesis. Part of a signaling cascade that is activated by increased cellular retinol and that leads to the activation of STAT5 (STAT5A or STAT5B). In the nucleus, plays a key role in chromatin by specifically mediating phosphorylation of 'Tyr-41' of histone H3 (H3Y41ph), a specific tag that promotes exclusion of CBX5 (HP1 alpha) from chromatin. Up-regulates the potassium voltage-gated channel activity of KCNA3. In Gallus gallus (Chicken), this protein is Tyrosine-protein kinase JAK2.